A 378-amino-acid polypeptide reads, in one-letter code: Glutamate 5-kinase (378 aa).

Lys20 lines the ATP pocket. Residues Ser60, Asp147, and Asn159 each contribute to the substrate site. Residues 179–180 and 221–227 each bind ATP; these read TD and TGGMLTK. A PUA domain is found at 286–364; sequence RGRVVLDDGA…SQIARILGSM (79 aa).

Belongs to the glutamate 5-kinase family.

The protein resides in the cytoplasm. It catalyses the reaction L-glutamate + ATP = L-glutamyl 5-phosphate + ADP. Its pathway is amino-acid biosynthesis; L-proline biosynthesis; L-glutamate 5-semialdehyde from L-glutamate: step 1/2. In terms of biological role, catalyzes the transfer of a phosphate group to glutamate to form L-glutamate 5-phosphate. This chain is Glutamate 5-kinase, found in Bordetella pertussis (strain Tohama I / ATCC BAA-589 / NCTC 13251).